A 649-amino-acid chain; its full sequence is Sodium/nucleoside cotransporter 1 (649 aa).

Residues 1–80 (MENDPSRRRE…ARSFCREHMQ (80 aa)) are Cytoplasmic-facing. The chain crosses the membrane as a helical span at residues 81–104 (LFRWIGTGLLCTGLSAFLLVACLL). Residues 105 to 109 (DFQRA) are Extracellular-facing. A helical membrane pass occupies residues 110–128 (LALFVLTCVVLTFLGHRLL). Topologically, residues 129–147 (KRLLGPKLRRFLKPQGHPR) are cytoplasmic. Residues 148-167 (LLLWFKRGLALAAFLGLVLW) form a helical membrane-spanning segment. The Extracellular segment spans residues 168 to 178 (LSLDTSQRPEQ). The helical transmembrane segment at 179-195 (LVSFAGICVFVALLFAC) threads the bilayer. The Cytoplasmic segment spans residues 196–201 (SKHHCA). Residues 202-222 (VSWRAVSWGLGLQFVLGLLVI) traverse the membrane as a helical segment. At 223 to 261 (RTEPGFIAFEWLGEQIRIFLSYTKAGSSFVFGEALVKDV) the chain is on the extracellular side. The chain crosses the membrane as a helical span at residues 262 to 283 (FAFQVLPIIVFFSCVISVLYHV). The Cytoplasmic segment spans residues 284–294 (GLMQWVILKIA). The helical transmembrane segment at 295 to 318 (WLMQVTMGTTATETLSVAGNIFVS) threads the bilayer. Residues 319–337 (QTEAPLLIRPYLADMTLSE) are Extracellular-facing. A helical transmembrane segment spans residues 338 to 360 (VHVVMTGGYATIAGSLLGAYISF). Residues 361–366 (GIDATS) lie on the Cytoplasmic side of the membrane. Residues 367–386 (LIAASVMAAPCALALSKLVY) form a helical membrane-spanning segment. The Extracellular segment spans residues 387–423 (PEVEESKFRREEGVKLTYGDAQNLIEAASTGAAISVK). Residues 424-446 (VVANIAANLIAFLAVLDFINAAL) form a helical membrane-spanning segment. At 447–457 (SWLGDMVDIQG) the chain is on the cytoplasmic side. The helical transmembrane segment at 458-479 (LSFQLICSYILRPVAFLMGVAW) threads the bilayer. Residues 480–534 (EDCPVVAELLGIKLFLNEFVAYQDLSKYKQRRLAGAEEWVGDRKQWISVRAEVLT) are Extracellular-facing. Residues 535–558 (TFALCGFANFSSIGIMLGGLTSMV) form a helical membrane-spanning segment. The Cytoplasmic portion of the chain corresponds to 559-569 (PQRKSDFSQIV). The helical transmembrane segment at 570-592 (LRALFTGACVSLVNACMAGILYM) threads the bilayer. At 593 to 649 (PRGAEVDCMSLLNTTLSSSSFEIYQCCREAFQSVNPEFSPEALDNCCRFYNHTICAQ) the chain is on the extracellular side. N-linked (GlcNAc...) asparagine glycans are attached at residues Asn605 and Asn643.

This sequence belongs to the concentrative nucleoside transporter (CNT) (TC 2.A.41) family. In terms of processing, N-glycosylated. N-glycosylation is required for localization to the plasma membrane and the transporter activity. Expressed in kidney.

Its subcellular location is the cell membrane. It is found in the apical cell membrane. The enzyme catalyses uridine(out) + Na(+)(out) = uridine(in) + Na(+)(in). It catalyses the reaction thymidine(out) + Na(+)(out) = thymidine(in) + Na(+)(in). It carries out the reaction cytidine(out) + Na(+)(out) = cytidine(in) + Na(+)(in). The catalysed reaction is adenosine(out) + Na(+)(out) = adenosine(in) + Na(+)(in). Due to its high apparent affinity but slow transport, adenosine could act as a negative regulator of pyrimidine transport under some conditions. Its function is as follows. Sodium and pyrimidine nucleoside symporter of the plasma membrane that imports uridine, thymidine and cytidine into cells by coupling their transport to the transmembrane sodium electrochemical gradient. Also transports adenosine, an atypical substrate transported with high apparent affinity, but low maximum velocity. Therefore, exhibits the transport characteristics of the nucleoside transport system cit or N2 subtype (N2/cit). Involved in renal nucleoside (re)absorption. The chain is Sodium/nucleoside cotransporter 1 from Homo sapiens (Human).